Here is a 568-residue protein sequence, read N- to C-terminus: Phosphoribosylaminoimidazole carboxylase (568 aa).

An ATP-grasp domain is found at lysine 110 to threonine 298. Glycine 138–alanine 193 serves as a coordination point for ATP.

This sequence in the C-terminal section; belongs to the AIR carboxylase family. Class I subfamily.

It catalyses the reaction 5-amino-1-(5-phospho-D-ribosyl)imidazole-4-carboxylate + H(+) = 5-amino-1-(5-phospho-beta-D-ribosyl)imidazole + CO2. It participates in purine metabolism; IMP biosynthesis via de novo pathway; 5-amino-1-(5-phospho-D-ribosyl)imidazole-4-carboxylate from 5-amino-1-(5-phospho-D-ribosyl)imidazole (carboxylase route): step 1/1. This is Phosphoribosylaminoimidazole carboxylase (ADE2) from Candida albicans (strain SC5314 / ATCC MYA-2876) (Yeast).